A 600-amino-acid chain; its full sequence is Dihydroxy-acid dehydratase (600 aa).

Asp82 provides a ligand contact to Mg(2+). Residue Cys123 participates in [2Fe-2S] cluster binding. Residues Asp124 and Lys125 each coordinate Mg(2+). Lys125 carries the post-translational modification N6-carboxylysine. [2Fe-2S] cluster is bound at residue Cys192. Residue Glu489 coordinates Mg(2+). Ser515 acts as the Proton acceptor in catalysis.

It belongs to the IlvD/Edd family. As to quaternary structure, homodimer. [2Fe-2S] cluster serves as cofactor. Requires Mg(2+) as cofactor.

The enzyme catalyses (2R)-2,3-dihydroxy-3-methylbutanoate = 3-methyl-2-oxobutanoate + H2O. It carries out the reaction (2R,3R)-2,3-dihydroxy-3-methylpentanoate = (S)-3-methyl-2-oxopentanoate + H2O. The protein operates within amino-acid biosynthesis; L-isoleucine biosynthesis; L-isoleucine from 2-oxobutanoate: step 3/4. It participates in amino-acid biosynthesis; L-valine biosynthesis; L-valine from pyruvate: step 3/4. Its function is as follows. Functions in the biosynthesis of branched-chain amino acids. Catalyzes the dehydration of (2R,3R)-2,3-dihydroxy-3-methylpentanoate (2,3-dihydroxy-3-methylvalerate) into 2-oxo-3-methylpentanoate (2-oxo-3-methylvalerate) and of (2R)-2,3-dihydroxy-3-methylbutanoate (2,3-dihydroxyisovalerate) into 2-oxo-3-methylbutanoate (2-oxoisovalerate), the penultimate precursor to L-isoleucine and L-valine, respectively. This chain is Dihydroxy-acid dehydratase, found in Bacteroides thetaiotaomicron (strain ATCC 29148 / DSM 2079 / JCM 5827 / CCUG 10774 / NCTC 10582 / VPI-5482 / E50).